The following is a 239-amino-acid chain: MLLLPLLPVLLCVVSVSSSGSQTCEDTLKTCSVIACGRDGRDGPKGEKGEPGQGLRGLQGPPGKLGPPGSVGSPGSPGPKGQKGDHGDNRAIEEKLANMEAEIRILKSKLQLTNKLHAFSMGKKSGKKLFVTNHEKMPFSKVKSLCTELQGTVAIPRNAEENKAIQEVATGIAFLGITDEATEGQFMYVTGGRLTYSNWKKDEPNNHGSGEDCVIILDNGLWNDISCQASFKAVCEFPA.

The first 18 residues, 1 to 18 (MLLLPLLPVLLCVVSVSS), serve as a signal peptide directing secretion. Residues 35–88 (ACGRDGRDGPKGEKGEPGQGLRGLQGPPGKLGPPGSVGSPGSPGPKGQKGDHGD) form a disordered region. The Collagen-like domain occupies 37 to 89 (GRDGRDGPKGEKGEPGQGLRGLQGPPGKLGPPGSVGSPGSPGPKGQKGDHGDN). Residues 38–50 (RDGRDGPKGEKGE) show a composition bias toward basic and acidic residues. Position 44 is a 4-hydroxyproline (Pro44). Residues Lys45 and Lys48 each carry the 5-hydroxylysine modification. O-linked (Gal...) hydroxylysine glycosylation is found at Lys45 and Lys48. 4-hydroxyproline occurs at positions 51, 62, 68, 74, and 79. Positions 58–74 (LQGPPGKLGPPGSVGSP) are enriched in low complexity. Residues Lys80 and Lys83 each carry the 5-hydroxylysine modification. Residues Lys80 and Lys83 are each glycosylated (O-linked (Gal...) hydroxylysine). Residues 144–239 (SLCTELQGTV…SFKAVCEFPA (96 aa)) enclose the C-type lectin domain. 2 disulfides stabilise this stretch: Cys146-Cys235 and Cys213-Cys227. Ca(2+) is bound by residues Asp179, Glu183, Glu203, Asn205, Glu211, Asp212, Asn223, and Asp224. The segment at 203 to 211 (EPNNHGSGE) is calcium-dependent carbohydrate binding.

Homotrimer. Forms higher oligomeric complexes formed by the association of two, three or more homotrimers. Oligomerization occurs in the endoplasmic reticulum. Interacts with MASP1 and MASP2. Hydroxylated on lysine and proline residues within the collagen-like domain. In terms of processing, O-glycosylated. O-linked glycans on hydroxylysine residues consist of Glc-Gal disaccharides bound to the oxygen atom of post-translationally added hydroxyl groups. As to expression, detected in liver and blood serum (at protein level). Detected in liver.

Its subcellular location is the secreted. Its function is as follows. Calcium-dependent lectin. Plays a role in the innate immune response by binding mannose, fucose and N-acetylglucosamine moieties on different microorganisms and mediating activation of the lectin complement pathway. Binds to late apoptotic cells, as well as to apoptotic blebs and to necrotic cells, but not to early apoptotic cells, facilitating their uptake by macrophages. The protein is Mannose-binding protein A (Mbl1) of Mus musculus (Mouse).